We begin with the raw amino-acid sequence, 328 residues long: Phosphate acyltransferase (328 aa).

This sequence belongs to the PlsX family. In terms of assembly, homodimer. Probably interacts with PlsY.

It localises to the cytoplasm. The enzyme catalyses a fatty acyl-[ACP] + phosphate = an acyl phosphate + holo-[ACP]. Its pathway is lipid metabolism; phospholipid metabolism. Functionally, catalyzes the reversible formation of acyl-phosphate (acyl-PO(4)) from acyl-[acyl-carrier-protein] (acyl-ACP). This enzyme utilizes acyl-ACP as fatty acyl donor, but not acyl-CoA. This is Phosphate acyltransferase from Mycoplasma genitalium (strain ATCC 33530 / DSM 19775 / NCTC 10195 / G37) (Mycoplasmoides genitalium).